The following is a 1179-amino-acid chain: Serine/threonine-protein kinase pakG (1179 aa).

A coiled-coil region spans residues 12–53; it reads SKTNEDIELIKQKLKEDRELLEKERAQFEEERKIIFESLNKV. Residues 111 to 124 enclose the CRIB domain; it reads IGTPFNVQHKVHVD. A Protein kinase domain is found at 139–390; the sequence is FLIDCILGTG…AIELLTHPFL (252 aa). ATP contacts are provided by residues 145-153 and Lys168; that span reads LGTGSYGTV. The active-site Proton acceptor is Asp257. Disordered stretches follow at residues 414-469, 589-631, 705-1086, and 1121-1179; these read KKKK…SSLD, IGNS…NNNN, SSSS…PITL, and TEIN…SPKK. Positions 621–668 form a coiled coil; the sequence is NNNNNNNNNNNEFLINQIKKELILDFNENMKQYINQQLTNLKEEMLKE. Low complexity-rich tracts occupy residues 705–723 and 743–761; these read SSSS…SNSS and LPPS…TSSP. The span at 762-776 shows a compositional bias: pro residues; that stretch reads SPSPSPSPSPSPSSP. Low complexity-rich tracts occupy residues 777 to 788 and 812 to 833; these read LPSSSTSTVNTP and NNNN…NNNN. Residues 834-857 show a composition bias toward polar residues; the sequence is VIQSPKLNNRPLSPTTPTKQFNNR. Positions 864–891 are enriched in low complexity; sequence FNNRPPSPSKFNNRPPSPSNRPLSPKNS. Residues 892–946 show a composition bias toward polar residues; the sequence is YNSLEKSNNGSISNNRPLSPKNSLEKSTTQNNTSSEDISTTTVTVTSEQGGTPIT. Positions 954–963 are enriched in pro residues; that stretch reads RPKPSPPPIP. Composition is skewed to low complexity over residues 964–997, 1024–1046, and 1053–1077; these read MNKS…TIAA, TTIT…SPNS, and ITTS…SSSN. Residues 1121-1135 are compositionally biased toward polar residues; the sequence is TEINLPSSSPSTPQK. The segment covering 1137 to 1158 has biased composition (low complexity); it reads NTPSSIPTTPTTPTTNGGSVSS.

The protein belongs to the protein kinase superfamily. STE Ser/Thr protein kinase family. STE20 subfamily. Mg(2+) is required as a cofactor.

The catalysed reaction is L-seryl-[protein] + ATP = O-phospho-L-seryl-[protein] + ADP + H(+). It carries out the reaction L-threonyl-[protein] + ATP = O-phospho-L-threonyl-[protein] + ADP + H(+). This is Serine/threonine-protein kinase pakG from Dictyostelium discoideum (Social amoeba).